Consider the following 359-residue polypeptide: Lactosylceramide 4-alpha-galactosyltransferase (359 aa).

Topologically, residues 1-30 (MGISCSHLEETMSKPPDCLLRMLRGTPRQR) are cytoplasmic. The chain crosses the membrane as a helical; Signal-anchor for type II membrane protein span at residues 31 to 51 (VFTFFIISFKFMFLISILIYW). The Lumenal segment spans residues 52–359 (HTVGAPKDQR…TTHRAMKMYL (308 aa)). Positions 198–200 (DTD) match the DXD motif motif. N-linked (GlcNAc...) asparagine glycans are attached at residues Asn-209 and Asn-315.

This sequence belongs to the glycosyltransferase 32 family.

The protein localises to the golgi apparatus membrane. It carries out the reaction a beta-D-Gal-(1-&gt;4)-beta-D-Glc-(1&lt;-&gt;1)-Cer(d18:1(4E)) + UDP-alpha-D-galactose = a globoside Gb3Cer (d18:1(4E)) + UDP + H(+). The enzyme catalyses a beta-D-Gal-(1&lt;-&gt;1')-ceramide + UDP-alpha-D-galactose = alpha-D-Gal-(1-&gt;4)-beta-D-Gal-(1&lt;-&gt;1')-Cer + UDP + H(+). Its pathway is glycolipid biosynthesis. Functionally, catalyzes the transfer of galactose from UDP-alpha-D-galactose to lactosylceramide/beta-D-galactosyl-(1-&gt;4)-beta-D-glucosyl-(1&lt;-&gt;1)-ceramide(d18:1(4E)) to produce globotriaosylceramide/globoside Gb3Cer (d18:1(4E)). Also able to transfer galactose to galactosylceramide/beta-D-Gal-(1&lt;-&gt;1')-Cer. Globoside Gb3Cer is a glycosphingolipid of the globo serie, one of the major types of neutral root structures of glycosphingolipids, that constitute a significant portion of mammalian cell membranes. This chain is Lactosylceramide 4-alpha-galactosyltransferase, found in Mus musculus (Mouse).